A 376-amino-acid chain; its full sequence is MITYSHQNIDQSDIDALTKALKDEILTGGKKVDEFEEALCEYIGVKHACVLNSATSALHLAYTALGIKEKIVLTTPLTFAATANAALIAGAKVEFIDIKNDGNIDEKKLEARLVKNSTDIGAISVVDFGGNSVEMDEISNLAKKYNIPLIDDASHALGSEYKGKKVGSMADLSIFSFHPVKPITTFEGGAVVSNNKELISKIKLLRSHGIVKKRLWDSDMIELGYNYRLSDVACALGINQLKKLDHNLEKREEITSFYDKEFEKNHYFSTIKIKDYKKSSRHLYPILLFPEFYCQKEELFESLLHAGIGVQVHYKPTYEFSFYKKLLGEIRLQNADNFYKAELSIPCHQEMNLKDAKFVKDTLFSILEKVKKGYCG.

Substrate contacts are provided by residues Tyr4, 24–27 (EILT), Ala54, and Ser176. At Lys181 the chain carries N6-(pyridoxal phosphate)lysine. Residues Asn226 and 311 to 314 (QVHY) contribute to the substrate site.

This sequence belongs to the DegT/DnrJ/EryC1 family.

It carries out the reaction UDP-4-amino-4,6-dideoxy-N-acetyl-beta-L-altrosamine + 2-oxoglutarate = UDP-2-acetamido-2,6-dideoxy-beta-L-arabino-hex-4-ulose + L-glutamate. Catalyzes the second step in the biosynthesis of pseudaminic acid, a sialic-acid-like sugar that is used to modify flagellin. Uses UDP-2-acetamido-2,6-dideoxy-beta-L-arabino-4-hexulose as substrate producing UDP-4-amino-4,6-dideoxy-beta-L-AltNAc. The chain is UDP-4-amino-4,6-dideoxy-N-acetyl-beta-L-altrosamine transaminase (pseC) from Campylobacter jejuni subsp. jejuni serotype O:23/36 (strain 81-176).